Here is a 106-residue protein sequence, read N- to C-terminus: Iron-sulfur cluster assembly protein CyaY (106 aa).

The protein belongs to the frataxin family.

In terms of biological role, involved in iron-sulfur (Fe-S) cluster assembly. May act as a regulator of Fe-S biogenesis. The protein is Iron-sulfur cluster assembly protein CyaY of Escherichia coli O139:H28 (strain E24377A / ETEC).